An 89-amino-acid chain; its full sequence is HssA/B-like protein 21 (89 aa).

The protein belongs to the hssA/B family.

This chain is HssA/B-like protein 21 (hssl21), found in Dictyostelium discoideum (Social amoeba).